Here is a 194-residue protein sequence, read N- to C-terminus: MSNIQLIVGLGNPGLEYKYTRHNAGTWLVENLARMHNCTLSLQSKFFGYTGRVTIGGQDIRLLIPTTYMNKSGQAVAALAGFYRIPPESILVAYDELDLPPGIAKFKLGGSSSQNGIRDIVSSLGNNKDFYRLRVGIGHPGHKGKVSGYVLGKAPAKEQEQMDAAIDEGVRCIEILIKDDMKKAMNRLHSFKAE.

Residue Tyr17 participates in tRNA binding. The active-site Proton acceptor is the His22. Tyr68, Asn70, and Asn115 together coordinate tRNA.

It belongs to the PTH family. Monomer.

The protein localises to the cytoplasm. It catalyses the reaction an N-acyl-L-alpha-aminoacyl-tRNA + H2O = an N-acyl-L-amino acid + a tRNA + H(+). In terms of biological role, hydrolyzes ribosome-free peptidyl-tRNAs (with 1 or more amino acids incorporated), which drop off the ribosome during protein synthesis, or as a result of ribosome stalling. Functionally, catalyzes the release of premature peptidyl moieties from peptidyl-tRNA molecules trapped in stalled 50S ribosomal subunits, and thus maintains levels of free tRNAs and 50S ribosomes. This chain is Peptidyl-tRNA hydrolase, found in Pseudoalteromonas atlantica (strain T6c / ATCC BAA-1087).